The following is a 339-amino-acid chain: 4-hydroxy-2-oxovalerate aldolase (339 aa).

Residues Val-7–Met-259 form the Pyruvate carboxyltransferase domain. Arg-15 to Asp-16 is a substrate binding site. Asp-16 is a binding site for Mn(2+). The Proton acceptor role is filled by His-19. Ser-169 and His-198 together coordinate substrate. Residues His-198 and His-200 each contribute to the Mn(2+) site. Tyr-289 is a substrate binding site.

This sequence belongs to the 4-hydroxy-2-oxovalerate aldolase family.

It carries out the reaction (S)-4-hydroxy-2-oxopentanoate = acetaldehyde + pyruvate. The polypeptide is 4-hydroxy-2-oxovalerate aldolase (Marinomonas sp. (strain MWYL1)).